Reading from the N-terminus, the 371-residue chain is Partitioning defective 6 homolog beta (371 aa).

A phosphoserine mark is found at Ser-10 and Ser-11. In terms of domain architecture, PB1 spans 16–96 (TMEVKSKFGA…PLLRIFIQKK (81 aa)). An interaction with PARD3 and CDC42 region spans residues 126–253 (RKKPHIVISM…ITVRPANQRN (128 aa)). One can recognise a Pseudo-CRIB domain in the interval 133–150 (ISMPQDFRPVSSIIDVDI). Residues 157 to 250 (RVRLYKYGTE…NLIITVRPAN (94 aa)) form the PDZ domain. Disordered regions lie at residues 253-273 (NNVV…DNSL) and 326-371 (FESG…IITL). The span at 326–340 (FESGQNGFSPPQDTS) shows a compositional bias: polar residues. Over residues 352–363 (LESRAPDQKLLE) the composition is skewed to basic and acidic residues.

The protein belongs to the PAR6 family. As to quaternary structure, interacts with PARD3. Interacts with GTP-bound forms of CDC42, RHOQ/TC10 and RAC1. Interacts with the N-terminal part of PRKCI and PRKCZ. Part of a complex with PARD3, CDC42 or RAC1 and PRKCI or PRKCZ. Part of a complex with LLGL1 and PRKCI. Interacts with ALS2CR19. Interacts with ECT2. Interacts with PALS1. Expressed in pancreas and in both adult and fetal kidney. Weakly expressed in placenta and lung. Not expressed in other tissues.

Its subcellular location is the cytoplasm. It is found in the cell membrane. The protein localises to the cell junction. It localises to the tight junction. In terms of biological role, adapter protein involved in asymmetrical cell division and cell polarization processes. Probably involved in formation of epithelial tight junctions. Association with PARD3 may prevent the interaction of PARD3 with F11R/JAM1, thereby preventing tight junction assembly. The PARD6-PARD3 complex links GTP-bound Rho small GTPases to atypical protein kinase C proteins. This is Partitioning defective 6 homolog beta (Pard6b) from Mus musculus (Mouse).